Consider the following 431-residue polypeptide: Lipid storage droplets surface-binding protein 1 (431 aa).

A disordered region spans residues 397–431; that stretch reads KVTGSDGGNSNHRSSRRRQDPNHYSATHNNINGVY. Positions 418-431 are enriched in polar residues; it reads NHYSATHNNINGVY.

Belongs to the perilipin family.

The protein localises to the cytoplasm. Its subcellular location is the lipid droplet. In terms of biological role, required for normal deposition of neutral lipids in the oocyte. The sequence is that of Lipid storage droplets surface-binding protein 1 from Drosophila melanogaster (Fruit fly).